Reading from the N-terminus, the 417-residue chain is Protein translocase subunit SecD (417 aa).

The next 6 helical transmembrane spans lie at 9-29 (LLVSVLAIVIAFAVFIKPLVS), 236-256 (ASMKAFAIGLAGVFLFMLLYY), 258-278 (LSGLVADIVLLLYTLLLLAVM), 288-308 (PGMAGIILSIGMAVDANVLIF), 333-353 (FTTILDSNVTTLMAAAVLFYL), and 360-380 (GFAVTLALGVLISMFTAVTVT).

This sequence belongs to the SecD/SecF family. SecD subfamily. Forms a complex with SecF. Part of the essential Sec protein translocation apparatus which comprises SecA, SecYEG and auxiliary proteins SecDF. Other proteins may also be involved.

Its subcellular location is the cell membrane. In terms of biological role, part of the Sec protein translocase complex. Interacts with the SecYEG preprotein conducting channel. SecDF uses the proton motive force (PMF) to complete protein translocation after the ATP-dependent function of SecA. This is Protein translocase subunit SecD from Acidaminococcus fermentans (strain ATCC 25085 / DSM 20731 / CCUG 9996 / CIP 106432 / VR4).